The primary structure comprises 323 residues: Queuosine 5'-phosphate N-glycosylase/hydrolase (323 aa).

Asparagine 72, tyrosine 93, lysine 199, phenylalanine 229, aspartate 231, aspartate 298, tryptophan 302, and glutamine 306 together coordinate queuosine 5'-phosphate. Residue aspartate 231 is the Nucleophile or transition state stabilizer of the active site.

The protein belongs to the QNG1 protein family. In terms of assembly, monomer.

It catalyses the reaction queuosine 5'-phosphate + H2O = queuine + D-ribose 5-phosphate. In terms of biological role, catalyzes the hydrolysis of queuosine 5'-phosphate, releasing the nucleobase queuine (q). Is likely required for salvage of queuine from exogenous queuosine (Q) that is imported and then converted to queuosine 5'-phosphate intracellularly. In vitro, can also catalyze the release of the q base directly from Q as substrate; however, Q may not be the biologically relevant substrate. Shows a very low activity on queuosine 3',5'-diphosphate, and cannot release q from queuosine 3'-phosphate and from the 5'-nucleotides AMP, UMP, CMP or GMP, indicating specificity for the queuine base. This chain is Queuosine 5'-phosphate N-glycosylase/hydrolase, found in Sphaerobacter thermophilus (strain ATCC 49802 / DSM 20745 / KCCM 41009 / NCIMB 13125 / S 6022).